A 292-amino-acid chain; its full sequence is 1D-myo-inositol 2-acetamido-2-deoxy-alpha-D-glucopyranoside deacetylase (292 aa).

3 residues coordinate Zn(2+): H11, D14, and H146.

It belongs to the MshB deacetylase family. Zn(2+) serves as cofactor.

It carries out the reaction 1D-myo-inositol 2-acetamido-2-deoxy-alpha-D-glucopyranoside + H2O = 1D-myo-inositol 2-amino-2-deoxy-alpha-D-glucopyranoside + acetate. Its function is as follows. Catalyzes the deacetylation of 1D-myo-inositol 2-acetamido-2-deoxy-alpha-D-glucopyranoside (GlcNAc-Ins) in the mycothiol biosynthesis pathway. This chain is 1D-myo-inositol 2-acetamido-2-deoxy-alpha-D-glucopyranoside deacetylase, found in Acidothermus cellulolyticus (strain ATCC 43068 / DSM 8971 / 11B).